The following is a 382-amino-acid chain: Sphingoid long-chain base transporter RSB1 (382 aa).

The Extracellular segment spans residues 1–34 (MSNATNNTLGSLLPQLEAAANSNSLYGGMVPNLR). Asn-3 and Asn-6 each carry an N-linked (GlcNAc...) asparagine glycan. The helical transmembrane segment at 35 to 55 (FNITMIVIWGILLTIHVVQLL) threads the bilayer. Topologically, residues 56-57 (MR) are cytoplasmic. A helical membrane pass occupies residues 58 to 78 (QYWFSIAFICTGILEVLGYIG). Residues 79–90 (RTWSHSNVADMD) lie on the Extracellular side of the membrane. The helical transmembrane segment at 91-111 (AFLLNMICLTIAPVFTMGGIY) threads the bilayer. Topologically, residues 112-135 (YQLAKLIEVYGHRFSLLPSPMAYS) are cytoplasmic. The chain crosses the membrane as a helical span at residues 136–156 (FIFICSDIVSLVVQAVGGGLC). At 157–171 (GVAVTDGTSTTTGNH) the chain is on the extracellular side. A helical transmembrane segment spans residues 172–192 (VFIAGLAIQVASMAIFLMLWF). The Cytoplasmic segment spans residues 193–241 (HFLFRIYISVRWEHINSRPISLSLLKISQTEVDYLYREKFHFLRLEPKR). A helical transmembrane segment spans residues 242–262 (WVFHYFNLAMTVAVLTIFTRC). The Extracellular portion of the chain corresponds to 263-281 (CYRLAELVVGWDGYLITHE). A helical transmembrane segment spans residues 282-302 (WYFIILDALMMAIATVTLTIF). Residues 303–382 (HPGFAFKGRS…LFSSKKKAKL (80 aa)) are Cytoplasmic-facing.

The protein belongs to the lipid-translocating exporter (LTE) (TC 9.A.26.1) family.

It localises to the cell membrane. Its function is as follows. Catalyzes the ATP-dependent translocation of sphingoid long-chain bases (LCBs) from the cytoplasmic site toward the extracytoplasmic side of the membrane (flip-flop). Involved in the establishment of the functional lipid asymmetry of the plasma membrane. Regulates intracellular levels of LCBs, sphingolipid precursors that are growth inhibitory at increased levels. The sequence is that of Sphingoid long-chain base transporter RSB1 (RSB1) from Saccharomyces cerevisiae (strain Lalvin EC1118 / Prise de mousse) (Baker's yeast).